We begin with the raw amino-acid sequence, 694 residues long: DNA-directed RNA polymerase subunit beta' (694 aa).

The Zn(2+) site is built by C69, C71, C87, and C90. Mg(2+) contacts are provided by D489, D491, and D493.

The protein belongs to the RNA polymerase beta' chain family. RpoC1 subfamily. In plastids the minimal PEP RNA polymerase catalytic core is composed of four subunits: alpha, beta, beta', and beta''. When a (nuclear-encoded) sigma factor is associated with the core the holoenzyme is formed, which can initiate transcription. Mg(2+) is required as a cofactor. Zn(2+) serves as cofactor.

The protein resides in the plastid. It is found in the chloroplast. It carries out the reaction RNA(n) + a ribonucleoside 5'-triphosphate = RNA(n+1) + diphosphate. Functionally, DNA-dependent RNA polymerase catalyzes the transcription of DNA into RNA using the four ribonucleoside triphosphates as substrates. This is DNA-directed RNA polymerase subunit beta' from Adiantum capillus-veneris (Maidenhair fern).